Here is a 353-residue protein sequence, read N- to C-terminus: tRNA N6-adenosine threonylcarbamoyltransferase (353 aa).

His-119 and His-123 together coordinate Fe cation. Residues 145 to 149 (LVSGG), Asp-178, Gly-191, and Asn-285 each bind substrate. A Fe cation-binding site is contributed by Asp-313.

It belongs to the KAE1 / TsaD family. The cofactor is Fe(2+).

Its subcellular location is the cytoplasm. It catalyses the reaction L-threonylcarbamoyladenylate + adenosine(37) in tRNA = N(6)-L-threonylcarbamoyladenosine(37) in tRNA + AMP + H(+). Its function is as follows. Required for the formation of a threonylcarbamoyl group on adenosine at position 37 (t(6)A37) in tRNAs that read codons beginning with adenine. Is involved in the transfer of the threonylcarbamoyl moiety of threonylcarbamoyl-AMP (TC-AMP) to the N6 group of A37, together with TsaE and TsaB. TsaD likely plays a direct catalytic role in this reaction. The sequence is that of tRNA N6-adenosine threonylcarbamoyltransferase from Magnetococcus marinus (strain ATCC BAA-1437 / JCM 17883 / MC-1).